Consider the following 463-residue polypeptide: MRFYNTLSKHIEEFKENEPGIVRMYVCGPTVYGLIHIGNARPMVVFDALRRYLEYRGYRVIMVQNFTDIDDKIINKSIEFSVDFKDISETFIAEYWRDSMALGVRAPNFSPKTSDFVPEIINAIQNLIAKNHAYVVDGDVYFSVRSFPRYGELSHRSIDELKAGARIDLNEKKRDPLDFALWKSAKPGEPYWKSPWGNGRPGWHIECSVMSTKLLGTTLDIHAGGEDLIFPHHENEKAQSEALTGKTFVKYWLHNGMIKYTGDKMSKSTGNIFLLREALKKYGADALKIFFLSKHYRSPIEFSEKALSSAAKAATRINETFLRFESEFSFAIPKQDSWINEKRSIFIDSLDDDFNTPRALALIFELVNSLNRAMDDGNERDALKIYHLLRREFCPVLGLFDLPERADNRSIEELVKILIDVRAELRAKKQYELSDMIRSKLRKVGIELKDMPQGTTYTFIKEV.

Residue cysteine 27 coordinates Zn(2+). A 'HIGH' region motif is present at residues 29 to 39 (PTVYGLIHIGN). Residues cysteine 207, histidine 232, and glutamate 236 each contribute to the Zn(2+) site. Positions 264–268 (KMSKS) match the 'KMSKS' region motif. Lysine 267 contacts ATP.

The protein belongs to the class-I aminoacyl-tRNA synthetase family. Monomer. Zn(2+) serves as cofactor.

The protein localises to the cytoplasm. It catalyses the reaction tRNA(Cys) + L-cysteine + ATP = L-cysteinyl-tRNA(Cys) + AMP + diphosphate. This Pseudothermotoga lettingae (strain ATCC BAA-301 / DSM 14385 / NBRC 107922 / TMO) (Thermotoga lettingae) protein is Cysteine--tRNA ligase.